A 432-amino-acid chain; its full sequence is Enolase (432 aa).

Q167 is a binding site for (2R)-2-phosphoglycerate. E209 acts as the Proton donor in catalysis. Mg(2+) is bound by residues D246, E289, and D316. Positions 341, 370, 371, and 392 each coordinate (2R)-2-phosphoglycerate. The active-site Proton acceptor is K341.

It belongs to the enolase family. Mg(2+) serves as cofactor.

The protein localises to the cytoplasm. Its subcellular location is the secreted. It localises to the cell surface. It catalyses the reaction (2R)-2-phosphoglycerate = phosphoenolpyruvate + H2O. The protein operates within carbohydrate degradation; glycolysis; pyruvate from D-glyceraldehyde 3-phosphate: step 4/5. Functionally, catalyzes the reversible conversion of 2-phosphoglycerate (2-PG) into phosphoenolpyruvate (PEP). It is essential for the degradation of carbohydrates via glycolysis. This Thermotoga neapolitana (strain ATCC 49049 / DSM 4359 / NBRC 107923 / NS-E) protein is Enolase.